Reading from the N-terminus, the 391-residue chain is 4-hydroxy-3-methylbut-2-en-1-yl diphosphate synthase (flavodoxin) (391 aa).

Positions 282, 285, 317, and 324 each coordinate [4Fe-4S] cluster.

It belongs to the IspG family. [4Fe-4S] cluster serves as cofactor.

The catalysed reaction is (2E)-4-hydroxy-3-methylbut-2-enyl diphosphate + oxidized [flavodoxin] + H2O + 2 H(+) = 2-C-methyl-D-erythritol 2,4-cyclic diphosphate + reduced [flavodoxin]. Its pathway is isoprenoid biosynthesis; isopentenyl diphosphate biosynthesis via DXP pathway; isopentenyl diphosphate from 1-deoxy-D-xylulose 5-phosphate: step 5/6. Converts 2C-methyl-D-erythritol 2,4-cyclodiphosphate (ME-2,4cPP) into 1-hydroxy-2-methyl-2-(E)-butenyl 4-diphosphate. The polypeptide is 4-hydroxy-3-methylbut-2-en-1-yl diphosphate synthase (flavodoxin) (Acidothermus cellulolyticus (strain ATCC 43068 / DSM 8971 / 11B)).